The following is a 248-amino-acid chain: PF03932 family protein CutC (248 aa).

Belongs to the CutC family. Homodimer.

Its subcellular location is the cytoplasm. The polypeptide is PF03932 family protein CutC (Salmonella schwarzengrund (strain CVM19633)).